The following is a 277-amino-acid chain: Ras suppressor protein 1 (277 aa).

The segment at M1 to D24 is disordered. An N-acetylserine modification is found at S2. Basic and acidic residues predominate over residues K7 to D24. LRR repeat units follow at residues H41–K63, N64–L85, K87–P109, A110–L133, T135–L156, K158–L179, and Q181–L202. The tract at residues M250–R277 is disordered. Residues P256–K265 are compositionally biased toward basic and acidic residues.

Its function is as follows. Potentially plays a role in the Ras signal transduction pathway. Capable of suppressing v-Ras transformation in vitro. The polypeptide is Ras suppressor protein 1 (RSU1) (Homo sapiens (Human)).